The chain runs to 146 residues: Hemoglobin subunit beta (146 aa).

The Globin domain maps to 2-146 (QWTAEEKQLI…VAHALARKYH (145 aa)). Heme b contacts are provided by histidine 63 and histidine 92.

This sequence belongs to the globin family. Heterotetramer of two alpha chains and two beta chains. In terms of tissue distribution, red blood cells.

Involved in oxygen transport from the lung to the various peripheral tissues. This chain is Hemoglobin subunit beta (HBB), found in Rhea americana (Greater rhea).